The following is a 466-amino-acid chain: Soluble pyridine nucleotide transhydrogenase (466 aa).

Position 36–45 (36–45 (ERYHNVGGGC)) interacts with FAD.

Belongs to the class-I pyridine nucleotide-disulfide oxidoreductase family. It depends on FAD as a cofactor.

The protein resides in the cytoplasm. The catalysed reaction is NAD(+) + NADPH = NADH + NADP(+). Conversion of NADPH, generated by peripheral catabolic pathways, to NADH, which can enter the respiratory chain for energy generation. This is Soluble pyridine nucleotide transhydrogenase from Enterobacter sp. (strain 638).